The chain runs to 394 residues: Dual specificity protein phosphatase 4 (394 aa).

V2 carries the N-acetylvaline modification. The Rhodanese domain maps to 41-159 (SGGKCLLLDC…FSSEYPEFCS (119 aa)). Residues 195 to 336 (GPVEILPFLY…LLQFESQVLA (142 aa)) form the Tyrosine-protein phosphatase domain. The Phosphocysteine intermediate role is filled by C280. Phosphoserine; by MAPK occurs at positions 386 and 391.

This sequence belongs to the protein-tyrosine phosphatase family. Non-receptor class dual specificity subfamily. Hollow spherical complex composed of 24 subunits with pseudooctahedral symmetry, has a tetramer as the basic unit. In terms of processing, phosphorylation in the C-terminus by ERK1/2 inhibits proteasomal degradation and stabilizes the protein.

It is found in the nucleus. It catalyses the reaction O-phospho-L-tyrosyl-[protein] + H2O = L-tyrosyl-[protein] + phosphate. It carries out the reaction O-phospho-L-seryl-[protein] + H2O = L-seryl-[protein] + phosphate. The enzyme catalyses O-phospho-L-threonyl-[protein] + H2O = L-threonyl-[protein] + phosphate. Functionally, regulates mitogenic signal transduction by dephosphorylating both Thr and Tyr residues on MAP kinases ERK1 and ERK2. In Homo sapiens (Human), this protein is Dual specificity protein phosphatase 4 (DUSP4).